A 185-amino-acid polypeptide reads, in one-letter code: Calcium-binding protein CML37 (185 aa).

Over residues 1 to 12 (MTLAKNQKSSLS) the composition is skewed to polar residues. The tract at residues 1 to 45 (MTLAKNQKSSLSRLYKKVSSKRSESSRNLEDESRTSSNSSGSSSL) is disordered. A compositionally biased stretch (basic and acidic residues) spans 21 to 34 (KRSESSRNLEDESR). Residues 35–44 (TSSNSSGSSS) show a composition bias toward low complexity. 4 EF-hand domains span residues 45 to 80 (LNVN…LGGA), 81 to 116 (LSSR…EDGS), 119 to 154 (ERRK…LGES), and 155 to 185 (CTVD…LMMR). Residues Asp58, Asn60, Asp62, Lys64, Glu69, Asp94, Asp96, Asp98, and Glu105 each coordinate Ca(2+). Asp168, Asn170, Asp172, and Glu179 together coordinate Ca(2+).

In terms of assembly, binds to ABCG36. Expressed in cotyledons, stipule, young leaves and at the hypocotyl-root junction. In mature root, expressed in the stele, cortex, emerging lateral root, root tip and root cap. In mature plant, expressed at the base of cauline and floral branches, and in rosette and cauline leaves. Expressed from stage 9 to 14 of flower development in anthers. At stage 15, expressed in carpel, sepals, petals and pollen until dehiscence. Expressed in developing seeds and young siliques.

In terms of biological role, potential calcium sensor that binds calcium in vitro. The chain is Calcium-binding protein CML37 from Arabidopsis thaliana (Mouse-ear cress).